A 1196-amino-acid polypeptide reads, in one-letter code: Protein BRASSINOSTEROID INSENSITIVE 1 (1196 aa).

Residues 1-23 (MKTFSSFFLSVTTLFFFSFFSLS) form the signal peptide. The Cys pair 1 signature appears at 62 to 69 (CTFDGVTC). 21 LRR repeats span residues 71 to 98 (DDKV…LLSL), 99 to 121 (TGLE…FKCS), 122 to 146 (ASLT…SLGS), 148 to 169 (SGLK…VSGG), 172 to 197 (LNSL…VLSD), 199 to 221 (CGEL…VSRC), 222 to 244 (VNLE…LGDC), 245 to 268 (SALQ…ISTC), 269 to 290 (TELK…PLPL), 291 to 314 (KSLQ…LSGA), 316 to 338 (DTLT…FFGS), 339 to 363 (CSLL…TLLK), 364 to 388 (MRGL…LTNL), 390 to 413 (ASLL…LCQN), 415 to 439 (KNTL…LSNC), 441 to 463 (ELVS…LGSL), 464 to 487 (SKLR…LMYV), 488 to 511 (KTLE…LSNC), 513 to 535 (NLNW…IGRL), 536 to 559 (ENLA…LGDC), and 561 to 583 (SLIW…MFKQ). Residue Asn112 is glycosylated (N-linked (GlcNAc...) asparagine). Asn154 carries an N-linked (GlcNAc...) asparagine glycan. N-linked (GlcNAc...) asparagine glycosylation occurs at Asn233. A glycan (N-linked (GlcNAc...) asparagine) is linked at Asn275. 4 N-linked (GlcNAc...) asparagine glycosylation sites follow: Asn351, Asn387, Asn401, and Asn438. An N-linked (GlcNAc...) asparagine glycan is attached at Asn510. N-linked (GlcNAc...) asparagine glycosylation is found at Asn545 and Asn573. A brassinolide-binding site is contributed by Tyr597. An N-linked (GlcNAc...) asparagine glycan is attached at Asn636. The SERK1 binding stretch occupies residues 640 to 642 (RVY). Brassinolide contacts are provided by Tyr642 and Ser647. A glycan (N-linked (GlcNAc...) asparagine) is linked at Asn653. 4 LRR repeats span residues 653–677 (NGSM…IGSM), 678–701 (PYLF…VGDL), 702–725 (RGLN…MSAL), and 727–750 (MLTE…QFET). Asn705 provides a ligand contact to brassinolide. Residues 726-729 (TMLT) form an SERK1 binding region. The N-linked (GlcNAc...) asparagine glycan is linked to Asn737. The tract at residues 746–750 (GQFET) is SERK1 binding. A Cys pair 2 motif is present at residues 763–770 (CGYPLPRC). Residues 793-813 (AGSVAMGLLFSFVCIFGLILV) traverse the membrane as a helical segment. Tyr831 is subject to Phosphotyrosine. At Ser838 the chain carries Phosphoserine. Residues Thr842, Thr846, and Thr851 each carry the phosphothreonine modification. Ser858 is subject to Phosphoserine. Residues Thr872 and Thr880 each carry the phosphothreonine modification. The Protein kinase domain maps to 883 to 1158 (FHNDSLIGSG…VQVMAMFKEI (276 aa)). 2 positions are modified to phosphoserine: Ser887 and Ser891. ATP is bound by residues 889–897 (IGSGGFGDV) and Lys911. The residue at position 956 (Tyr956) is a Phosphotyrosine. Residues 957-959 (EFM) and 963-966 (SLED) contribute to the ATP site. A Phosphoserine modification is found at Ser981. The residue at position 982 (Thr982) is a Phosphothreonine. Residue Asp1009 is the Proton acceptor of the active site. ATP is bound by residues 1009–1014 (DMKSSN) and Asp1027. The residue at position 1035 (Ser1035) is a Phosphoserine. Thr1039 is modified (phosphothreonine). Phosphoserine is present on residues Ser1042 and Ser1044. Phosphothreonine occurs at positions 1045 and 1049. Tyr1052 carries the phosphotyrosine modification. Ser1060 bears the Phosphoserine mark. Tyr1072 bears the Phosphotyrosine mark. Residues Ser1166 and Ser1168 each carry the phosphoserine modification. A Phosphothreonine modification is found at Thr1169. Residues Ser1172 and Ser1179 each carry the phosphoserine modification. Thr1180 is modified (phosphothreonine). Ser1187 carries the post-translational modification Phosphoserine.

Belongs to the protein kinase superfamily. Ser/Thr protein kinase family. Monomer or homodimer in the plasma membrane. Heterodimer with BAK1 in the endosomes. Interacts with SERK1 and TTL in a kinase-dependent manner. Bind to SERK1 in a brassinolide-dependent manner. Component of the SERK1 signaling complex, composed of KAPP, CDC48A, GRF6 or GRF7, SERK1, SERK2, SERK3/BAK1 and BRI1. Interacts with CDG1. No interactions with PSKR1 or CNGC17. Interacts with BIK1. Interacts with B'ALPHA, B'BETA, B'GAMMA and B'ETA. Interacts with BSK1 and BSK3. Interacts with BSK5, BSK6 and BSK11. Post-translationally, autophosphorylated on Tyr-831, Tyr-956 and maybe Tyr-1072. Phosphorylated on at least 12 sites, with a preference for Ser residues. Transphosphorylated on Ser-887 by SERK1 and on Ser-838, Thr-846, Ser-858 and Ser-1166 by BAK1. Phosphorylation on Ser-1166 enhances the kinase activity. In terms of processing, glycosylated. In terms of tissue distribution, expressed ubiquitously.

Its subcellular location is the cell membrane. The protein localises to the endosome membrane. The catalysed reaction is L-seryl-[protein] + ATP = O-phospho-L-seryl-[protein] + ADP + H(+). The enzyme catalyses L-threonyl-[protein] + ATP = O-phospho-L-threonyl-[protein] + ADP + H(+). It carries out the reaction L-tyrosyl-[protein] + ATP = O-phospho-L-tyrosyl-[protein] + ADP + H(+). Its activity is regulated as follows. Activated by Ser and Thr phosphorylation. Functionally, receptor with a dual specificity kinase activity acting on both serine/threonine- and tyrosine-containing substrates. Regulates, in response to brassinosteroid binding, a signaling cascade involved in plant development, including expression of light- and stress-regulated genes, promotion of cell elongation, normal leaf and chloroplast senescence, and flowering. Binds brassinolide (BL), and less effectively castasterone (CS), but not 2,3,22,23-O-tetramethylbrassinolide or ecdysone. May be involved in a feedback regulation of brassinosteroid biosynthesis. Phosphorylates BRI1-associated receptor kinase 1 (BAK1), Transthyretin-Like protein (TTL) and SERK1 on 'Ser-299' and 'Thr-462' in vitro. May have a guanylyl cyclase activity. Phosphorylates BSK1, BSK2 and BSK3 in vitro. Phosphorylates BSK1, BSK3, BSK5, BSK6, BSK8 and BSK11 in vitro. The chain is Protein BRASSINOSTEROID INSENSITIVE 1 from Arabidopsis thaliana (Mouse-ear cress).